Here is a 360-residue protein sequence, read N- to C-terminus: MKKWVVKIGTSILRGNEDQSTEQVIESLCKSLTSFIFKGNKVILVTSGAVGLGCKKLNLNTRPKELSALQAVAAVGQVNLMTLYEKTMKKLGHNIAQILITKTDFDSRESFNNASKTFQKLIDLNVIPIVNENDSIANEELKYGDNDTLSALVALAINANKLILLTDIENLYSKDPRNNEDAHPIKEVNSNQLKIIKDKNIQNYNNEWGTGGITTKLIAAEIATKGGVEVQLADGRNENNLINIFNEKKIGTIFHPVDKPVGNKKSWLSHAIKTVGQITLDEGACLAIEQKGASLLVVGVKEVEGDFTVNQAVRIVNTNKKEVAKGITSMSSDSLKRILNKKENINSSMIVVHRDVLALT.

An ATP-binding site is contributed by Lys7. 3 residues coordinate substrate: Ser47, Asp134, and Asn146. Residues 166–167 and 210–216 contribute to the ATP site; these read TD and TGGITTK. The PUA domain maps to 275–348; that stretch reads VGQITLDEGA…LNKKENINSS (74 aa).

This sequence belongs to the glutamate 5-kinase family.

Its subcellular location is the cytoplasm. It carries out the reaction L-glutamate + ATP = L-glutamyl 5-phosphate + ADP. Its pathway is amino-acid biosynthesis; L-proline biosynthesis; L-glutamate 5-semialdehyde from L-glutamate: step 1/2. Its function is as follows. Catalyzes the transfer of a phosphate group to glutamate to form L-glutamate 5-phosphate. This chain is Glutamate 5-kinase, found in Prochlorococcus marinus subsp. pastoris (strain CCMP1986 / NIES-2087 / MED4).